We begin with the raw amino-acid sequence, 318 residues long: 2-keto-3-deoxygluconate permease (318 aa).

10 helical membrane-spanning segments follow: residues 10–30, 42–62, 76–96, 105–125, 139–159, 163–183, 199–219, 224–244, 263–283, and 289–309; these read IPGGLMLVPLFLGALCNTFTP, GLITGTIPILAVWFFCMGASI, VLVVTKIATAWVVALIAGTFL, MLAGISVLALVAAMDMTNGGL, AGAFVLMSLESGPLMTMVILG, IATFEPQLFVGAVLPFLIGFA, VQTLIPFFAFALGNTINLSVI, FAGIFLGLLVIVVTGIPLILA, AGAAVATPLLIANMAPEFAPV, and ALVATSVIVTSVLVPIITALW.

This sequence belongs to the KdgT transporter family.

It is found in the cell inner membrane. It catalyses the reaction 2-dehydro-3-deoxy-D-gluconate(in) + H(+)(in) = 2-dehydro-3-deoxy-D-gluconate(out) + H(+)(out). In terms of biological role, catalyzes the proton-dependent uptake of 2-keto-3-deoxygluconate (KDG) into the cell. This Pectobacterium carotovorum subsp. carotovorum (Erwinia carotovora subsp. carotovora) protein is 2-keto-3-deoxygluconate permease.